A 285-amino-acid chain; its full sequence is Mitochondrial substrate carrier family protein S (285 aa).

The Mitochondrial intermembrane segment spans residues 1–9 (MSTERGLKD). 3 Solcar repeats span residues 4–87 (ERGL…MKVL), 96–183 (LTVG…CKRY), and 197–283 (LNLP…VIKL). The chain crosses the membrane as a helical span at residues 10 to 30 (SIAGTVAGAACLFTGHPFDTI). At 31–61 (RVRLQTSNTPIGIMECFRNTIKYEGFSGLYK) the chain is on the mitochondrial matrix side. The helical transmembrane segment at 62–82 (GVTSPLFGMMFETAVLFAGYG) threads the bilayer. The Mitochondrial intermembrane portion of the chain corresponds to 83-101 (QMKVLLQKDENTPLTVGQC). Residues 102–122 (AIAGGFAGVGASVVLTPVELV) traverse the membrane as a helical segment. The Mitochondrial matrix portion of the chain corresponds to 123-150 (KCRLQVQTTGPQKYKGSLDCLVQILKEG). The chain crosses the membrane as a helical span at residues 151–172 (GIRGAYRGFTPTIAREFVGNMA). The Mitochondrial intermembrane segment spans residues 173-199 (FFSTYETCKRYFKNKENKPNDDDELNL). A helical membrane pass occupies residues 200–220 (PALIISGGLGGMAYWTVLYPV). Over 221–258 (DVAKSKIQISEGAGPSPSIVKVLKEIYSKEGVKGLFRG) the chain is Mitochondrial matrix. The helical transmembrane segment at 259–277 (YTPTIIRSFPANAAMFSVY) threads the bilayer. The Mitochondrial intermembrane segment spans residues 278–285 (ELVIKLLG).

It belongs to the mitochondrial carrier (TC 2.A.29) family.

The protein resides in the mitochondrion inner membrane. Functionally, mitochondrial solute carriers shuttle metabolites, nucleotides, and cofactors through the mitochondrial inner membrane. Mediates the transport of acylcarnitines of different length across the mitochondrial inner membrane from the cytosol to the mitochondrial matrix for their oxidation by the mitochondrial fatty acid-oxidation pathway. The sequence is that of Mitochondrial substrate carrier family protein S (mcfS) from Dictyostelium discoideum (Social amoeba).